A 379-amino-acid polypeptide reads, in one-letter code: tRNA-specific 2-thiouridylase MnmA (379 aa).

Residues 23–30 and Leu-49 each bind ATP; that span reads AMSGGVDS. Cys-117 (nucleophile) is an active-site residue. A disulfide bridge links Cys-117 with Cys-214. Residue Gly-141 coordinates ATP. Residues 163–165 are interaction with tRNA; sequence RDQ. Cys-214 serves as the catalytic Cysteine persulfide intermediate.

It belongs to the MnmA/TRMU family.

Its subcellular location is the cytoplasm. The catalysed reaction is S-sulfanyl-L-cysteinyl-[protein] + uridine(34) in tRNA + AH2 + ATP = 2-thiouridine(34) in tRNA + L-cysteinyl-[protein] + A + AMP + diphosphate + H(+). Functionally, catalyzes the 2-thiolation of uridine at the wobble position (U34) of tRNA, leading to the formation of s(2)U34. The polypeptide is tRNA-specific 2-thiouridylase MnmA (Cereibacter sphaeroides (strain KD131 / KCTC 12085) (Rhodobacter sphaeroides)).